Consider the following 143-residue polypeptide: MTAPASLPAPLAEVVSDFAEVQGQDKLRLLLEFANELPALPSHLAESAMEPVPECQSPLFLHVDASDPNRVRLHFSAPAEAPTTRGFASILAAGLDEQPAADILAVPEDFYTELGLAALISPLRLRGMSAMLARIKRRLREAD.

The protein belongs to the SufE family.

This is an uncharacterized protein from Mycobacterium tuberculosis (strain CDC 1551 / Oshkosh).